Reading from the N-terminus, the 145-residue chain is METIFDYNQIKQIIPHRQPFLLIDKIVEYEEGKRCVGLKQVSGNEPFFQGHFPNYAVMPGVLITEALAQTGAVAMLNSEENKGKIALFAGIDKCRFKKQVVPGDTLMLEVEITKIKGPIGKGSAKATVDGQLACSCELTFAIQDA.

His-51 is an active-site residue.

Belongs to the thioester dehydratase family. FabZ subfamily.

It localises to the cytoplasm. The enzyme catalyses a (3R)-hydroxyacyl-[ACP] = a (2E)-enoyl-[ACP] + H2O. Functionally, involved in unsaturated fatty acids biosynthesis. Catalyzes the dehydration of short chain beta-hydroxyacyl-ACPs and long chain saturated and unsaturated beta-hydroxyacyl-ACPs. The polypeptide is 3-hydroxyacyl-[acyl-carrier-protein] dehydratase FabZ (Staphylococcus epidermidis (strain ATCC 35984 / DSM 28319 / BCRC 17069 / CCUG 31568 / BM 3577 / RP62A)).